The sequence spans 637 residues: 1,4-alpha-glucan branching enzyme GlgB (637 aa).

The Nucleophile role is filled by D307. Catalysis depends on E361, which acts as the Proton donor.

Belongs to the glycosyl hydrolase 13 family. GlgB subfamily. In terms of assembly, monomer.

It carries out the reaction Transfers a segment of a (1-&gt;4)-alpha-D-glucan chain to a primary hydroxy group in a similar glucan chain.. It functions in the pathway glycan biosynthesis; glycogen biosynthesis. Functionally, catalyzes the formation of the alpha-1,6-glucosidic linkages in glycogen by scission of a 1,4-alpha-linked oligosaccharide from growing alpha-1,4-glucan chains and the subsequent attachment of the oligosaccharide to the alpha-1,6 position. The polypeptide is 1,4-alpha-glucan branching enzyme GlgB (Oceanobacillus iheyensis (strain DSM 14371 / CIP 107618 / JCM 11309 / KCTC 3954 / HTE831)).